The chain runs to 280 residues: MAVTAALVKELRERTGAGMMECKKALVETNGDIELAIENMRKSGAAKAAKKAGNIAAEGTIMIKEGEGIAALVEVNCQTDFVAKDSNFVAFANQVTDAALASKASVEELQAQFEEARVALVAKIGENINIRRVQYVEGEALATYRHGDRIGVVVAGSADVETLKHVAMHVAASRPEFLTPDDVPAEVVAKEREVQVGIAMNEGKSKEIAEKMVEGRMKKFTGEVSLTGQPFVMEPKKTVGEILAEKGATVSAFIRLEVGEGIEKQEGLSFAEEVALAQKG.

Positions 79-82 are involved in Mg(2+) ion dislocation from EF-Tu; the sequence is TDFV.

The protein belongs to the EF-Ts family.

Its subcellular location is the cytoplasm. Functionally, associates with the EF-Tu.GDP complex and induces the exchange of GDP to GTP. It remains bound to the aminoacyl-tRNA.EF-Tu.GTP complex up to the GTP hydrolysis stage on the ribosome. The polypeptide is Elongation factor Ts (Vibrio cholerae serotype O1 (strain ATCC 39541 / Classical Ogawa 395 / O395)).